The chain runs to 247 residues: MSNLLLIIDSVSQKIRDRRKLEEFGQNPDEEIESSLKDVRQELQKLNEEQSRLEKNAQIPEYRVRESEAFLIRMQRRLESAEEEFEKQRRASSIPADGTSAFSANPQVASTNNKLTPLPSLQKTTSSSEGSDIEMEAMYPVDGNDPDPINVNVLAQMHQQMLNEQEESLGGIEASVQRQKRMGYAMNTELSEQNVLLDNMNNDADRIERRFDHAKNRLNKVSRKAKQYPRCFIILLLCALLLLVASI.

A coiled-coil region spans residues 27-94; that stretch reads NPDEEIESSL…FEKQRRASSI (68 aa). Positions 88-130 are disordered; that stretch reads QRRASSIPADGTSAFSANPQVASTNNKLTPLPSLQKTTSSSEG. Residues 100 to 130 are compositionally biased toward polar residues; that stretch reads SAFSANPQVASTNNKLTPLPSLQKTTSSSEG. Residues 159–221 enclose the t-SNARE coiled-coil homology domain; it reads QQMLNEQEES…DHAKNRLNKV (63 aa).

The protein resides in the golgi apparatus membrane. Its subcellular location is the prevacuolar compartment membrane. In terms of biological role, involved in vesicle-mediated protein transport between the Golgi and the vacuole. The protein is Syntaxin-like protein fsv1 (fsv1) of Schizosaccharomyces pombe (strain 972 / ATCC 24843) (Fission yeast).